The sequence spans 348 residues: MNLKEKLAELKEQGLAEIKEAKDLKKINDIRVSLLGKKGPITEVLRGMRDLSAEERPKVGQFANAIRDELTQALADKKDEIEVIKMAKKLEKETIDVTLPGVPVTTGNTHIITQIIDQIEKLFLGMGFQVVDGPEVEEDHYNFEMLNLPQDHPARDMQDTFYITEKILMRTQTSPVQARTMEKHDFSKGPLKMISPGKVYRRDTDDATHSHQFHQVEGLVIDKHITMADLKGTLQLIARTIFGEDREIRMRPSYFPFTEPSAEIDVSCFKCNGKGCSVCKYTGWIEVLGAGMVHPNVLEMAGVDSNVYGGFAFGLGPDRFAMLKYGVDDIREFYLNDVRFLSQFSQKG.

Glutamate 259 provides a ligand contact to Mg(2+).

Belongs to the class-II aminoacyl-tRNA synthetase family. Phe-tRNA synthetase alpha subunit type 1 subfamily. As to quaternary structure, tetramer of two alpha and two beta subunits. The cofactor is Mg(2+).

Its subcellular location is the cytoplasm. The catalysed reaction is tRNA(Phe) + L-phenylalanine + ATP = L-phenylalanyl-tRNA(Phe) + AMP + diphosphate + H(+). This is Phenylalanine--tRNA ligase alpha subunit from Ligilactobacillus salivarius (strain UCC118) (Lactobacillus salivarius).